The chain runs to 209 residues: Small ribosomal subunit protein uS4 (209 aa).

4 residues coordinate Zn(2+): cysteine 9, cysteine 12, cysteine 26, and cysteine 31. The C4-type zinc-finger motif lies at 9 to 31 (CKLCRREGMKLYLKGERCYTDKC). Residues 98-161 (ARLDNVVYRM…RDLEVIKKAI (64 aa)) enclose the S4 RNA-binding domain.

The protein belongs to the universal ribosomal protein uS4 family. As to quaternary structure, part of the 30S ribosomal subunit. Contacts protein S5. The interaction surface between S4 and S5 is involved in control of translational fidelity. It depends on Zn(2+) as a cofactor.

Functionally, one of the primary rRNA binding proteins, it binds directly to 16S rRNA where it nucleates assembly of the body of the 30S subunit. In terms of biological role, with S5 and S12 plays an important role in translational accuracy. This chain is Small ribosomal subunit protein uS4 (rpsD), found in Thermotoga maritima (strain ATCC 43589 / DSM 3109 / JCM 10099 / NBRC 100826 / MSB8).